The sequence spans 118 residues: Basic phospholipase A2 PA-5 (118 aa).

Disulfide bonds link C11–C71, C27–C117, C29–C45, C44–C98, C51–C91, C60–C84, and C78–C89. Residues Y28, G30, and G32 each contribute to the Ca(2+) site. H48 is a catalytic residue. D49 contacts Ca(2+). D92 is an active-site residue.

It belongs to the phospholipase A2 family. Group I subfamily. D49 sub-subfamily. Ca(2+) serves as cofactor. As to expression, expressed by the venom gland.

It localises to the secreted. It catalyses the reaction a 1,2-diacyl-sn-glycero-3-phosphocholine + H2O = a 1-acyl-sn-glycero-3-phosphocholine + a fatty acid + H(+). In terms of biological role, PLA2 catalyzes the calcium-dependent hydrolysis of the 2-acyl groups in 3-sn-phosphoglycerides. In Pseudechis australis (Mulga snake), this protein is Basic phospholipase A2 PA-5.